The chain runs to 21 residues: Protein IroK (21 aa).

Its function is as follows. Possible increased expression of this protein (due to mutations upstream of the start codon) is proposed to be responsible for resistance to 3-hydroxypropionic acid (3-HP). This Escherichia coli (strain K12) protein is Protein IroK (iroK).